Here is a 27-residue protein sequence, read N- to C-terminus: Palustrin-1d (27 aa).

A disulfide bridge links Cys21 with Cys27.

As to expression, expressed by the skin glands.

It localises to the secreted. Its function is as follows. Antimicrobial activity against Gram-negative bacterium E.coli. The protein is Palustrin-1d of Lithobates palustris (Pickerel frog).